The primary structure comprises 104 residues: Large ribosomal subunit protein eL31 (104 aa).

Belongs to the eukaryotic ribosomal protein eL31 family.

The protein is Large ribosomal subunit protein eL31 (rpl31e) of Aeropyrum pernix (strain ATCC 700893 / DSM 11879 / JCM 9820 / NBRC 100138 / K1).